Here is a 425-residue protein sequence, read N- to C-terminus: Enolase (425 aa).

Q163 contacts (2R)-2-phosphoglycerate. E205 serves as the catalytic Proton donor. D242, E286, and D313 together coordinate Mg(2+). Residues K338, R367, S368, and K389 each contribute to the (2R)-2-phosphoglycerate site. K338 acts as the Proton acceptor in catalysis.

Belongs to the enolase family. Mg(2+) serves as cofactor.

Its subcellular location is the cytoplasm. The protein resides in the secreted. It is found in the cell surface. It carries out the reaction (2R)-2-phosphoglycerate = phosphoenolpyruvate + H2O. It functions in the pathway carbohydrate degradation; glycolysis; pyruvate from D-glyceraldehyde 3-phosphate: step 4/5. Catalyzes the reversible conversion of 2-phosphoglycerate (2-PG) into phosphoenolpyruvate (PEP). It is essential for the degradation of carbohydrates via glycolysis. The polypeptide is Enolase (Helicobacter hepaticus (strain ATCC 51449 / 3B1)).